The following is a 265-amino-acid chain: Transcriptional activator AggR (265 aa).

Residues 164–261 (DKVRNTIEKD…GITPKQFLTY (98 aa)) enclose the HTH araC/xylS-type domain. 2 consecutive DNA-binding regions (H-T-H motif) follow at residues 181–202 (AIIADEFNVSEITIRKRLESEY) and 228–251 (ISQISNMIGFSSTSYFIRLFVKHF).

Homodimer.

Transcriptional activator of aggregative adherence fimbria I expression in enteroaggregative E.coli. The sequence is that of Transcriptional activator AggR (aggR) from Escherichia coli.